Consider the following 249-residue polypeptide: MLKGAWQARIVTLFPEAFPGTLGLSLTGKALEMGLWSLETIDLRPFGEGRHRNVDDNPAGGGAGMVLRADIVARALDAASVGTPSERSRWPVVYLSPRGKPFSQAMARDWAGAEGLTLLCGRFEGVDQRVLDAYAVEEVSLGDFVLTGGEIAAQALIDATVRLIPRVLGNHASTEEESFSEGLLEFPQYTRPTVWQDRTIPEVLLSGHHANIARWRRAEAERLTKERRPDLWRAYCAARGRDPDEDREL.

S-adenosyl-L-methionine is bound by residues glycine 121 and 141 to 146 (LGDFVL).

The protein belongs to the RNA methyltransferase TrmD family. Homodimer.

The protein localises to the cytoplasm. The catalysed reaction is guanosine(37) in tRNA + S-adenosyl-L-methionine = N(1)-methylguanosine(37) in tRNA + S-adenosyl-L-homocysteine + H(+). Specifically methylates guanosine-37 in various tRNAs. This Cereibacter sphaeroides (strain KD131 / KCTC 12085) (Rhodobacter sphaeroides) protein is tRNA (guanine-N(1)-)-methyltransferase.